The sequence spans 380 residues: Crotonobetainyl-CoA reductase (380 aa).

Belongs to the acyl-CoA dehydrogenase family. As to quaternary structure, homotetramer. The cofactor is FAD.

Its subcellular location is the cytoplasm. It carries out the reaction 4-(trimethylamino)butanoyl-CoA + oxidized [electron-transfer flavoprotein] + H(+) = crotonobetainyl-CoA + reduced [electron-transfer flavoprotein]. The protein operates within amine and polyamine metabolism; carnitine metabolism. Functionally, catalyzes the reduction of crotonobetainyl-CoA to gamma-butyrobetainyl-CoA. This is Crotonobetainyl-CoA reductase from Salmonella agona (strain SL483).